Here is a 331-residue protein sequence, read N- to C-terminus: Flotillin-like protein FloA (331 aa).

The next 2 membrane-spanning stretches (helical) occupy residues 6-26 (LMIL…FTFV) and 28-48 (VMLW…TLVG). The required for correct localization stretch occupies residues 236–331 (QTDQAEADKN…KDPSDEDRKS (96 aa)). 4 short sequence motifs (EA repeat) span residues 240 to 242 (AEA), 251 to 253 (AEE), 278 to 282 (EAEAE), and 288 to 290 (AEA). A disordered region spans residues 312–331 (EMRDSFGKLTKDPSDEDRKS).

It belongs to the flotillin-like FloA family. As to quaternary structure, homooligomerizes. Interacts with FloT. Interacts with FtsH midcell. Interacts with PhoR, colocalizes with PhoR in FloA-only membrane rafts.

It is found in the cell membrane. Its subcellular location is the membrane raft. Functionally, found in functional membrane microdomains (FMM) that may be equivalent to eukaryotic membrane rafts. FMMs are highly dynamic and increase in number as cells age. FloA and FloT function is partially redundant; double deletions have marked synthetic phenotypes. Flotillins are thought to be important factors in membrane fluidity, especially during periods of rapid growth in rich media. Whether specific proteins are associated with FMMs is controversial; in one study FloT rafts have been shown to include proteins involved in adaptation to stationary phase, while FloA-FloT rafts include proteins involved in differentiation including sporulation, biofilm formation and DNA uptake competence. Another (more finely resolved) study only showed association of NfeD2 with FloT rafts of all the proteins examined. Involved in spatial organization of membranes, perhaps recruiting proteins to specific membrane regions. Simultaneous overexpression of both FloA and FloT leads to defects in cell division and differentiation, in part caused by stabilization of FtsH and its subsequent increased ability to degrade proteins. Cells make more biofilm, are about half as long, have less EzrA and more frequent Z-rings. The polypeptide is Flotillin-like protein FloA (Bacillus subtilis (strain 168)).